A 294-amino-acid polypeptide reads, in one-letter code: Bifunctional protein FolD (294 aa).

Residues 175–177 (GVS) and I243 contribute to the NADP(+) site.

This sequence belongs to the tetrahydrofolate dehydrogenase/cyclohydrolase family. As to quaternary structure, homodimer.

It carries out the reaction (6R)-5,10-methylene-5,6,7,8-tetrahydrofolate + NADP(+) = (6R)-5,10-methenyltetrahydrofolate + NADPH. It catalyses the reaction (6R)-5,10-methenyltetrahydrofolate + H2O = (6R)-10-formyltetrahydrofolate + H(+). It functions in the pathway one-carbon metabolism; tetrahydrofolate interconversion. Functionally, catalyzes the oxidation of 5,10-methylenetetrahydrofolate to 5,10-methenyltetrahydrofolate and then the hydrolysis of 5,10-methenyltetrahydrofolate to 10-formyltetrahydrofolate. The protein is Bifunctional protein FolD of Xanthomonas campestris pv. campestris (strain 8004).